The sequence spans 1189 residues: Ras-specific guanine nucleotide-releasing factor 2 (1189 aa).

Residues glutamate 22 to tyrosine 133 form the PH 1 domain. Positions lysine 158–arginine 193 form a coiled coil. One can recognise an IQ domain in the interval aspartate 205–cysteine 234. A DH domain is found at lysine 243–glutamate 429. One can recognise a PH 2 domain in the interval proline 470–aspartate 588. One can recognise an N-terminal Ras-GEF domain in the interval lysine 635 to glycine 755. Residues valine 713–proline 738 are disordered. Phosphoserine is present on residues serine 725 and serine 726. Position 736 is a phosphoserine; by CDK5 (serine 736). The tract at residues lysine 743 to asparagine 751 is regulates proteasomal degradation. Residues serine 745 and serine 749 each carry the phosphoserine modification. The disordered stretch occupies residues leucine 757–proline 817. A compositionally biased stretch (low complexity) spans serine 762 to alanine 776. 3 positions are modified to phosphoserine: serine 801, serine 805, and serine 924. The region spanning serine 954–arginine 1186 is the Ras-GEF domain. A responsible of the affinity for farnesylated versus geranylgeranylated Ras region spans residues alanine 1051–lysine 1080.

In terms of assembly, homooligomer and heterooligomer with RASGRF1. Interacts with Ras and RAC1. Interacts in a calcium-dependent manner with calmodulin. Interacts with EPB49 and probably CDK5R1. Interacts with the AMPA receptor through GRIA1. Interacts with microtubules. Post-translationally, phosphorylated by CDK5; down-regulates RASGRF2-mediated RAC1 activation. In terms of processing, ubiquitinated upon interaction with Ras. Ubiquitination leads to degradation through the 26S proteasome. As to expression, expressed in brain in the nucleus of the solitary tract. Not observed in the hippocampus (at protein level).

The protein resides in the cytoplasm. It localises to the cell membrane. The protein localises to the endoplasmic reticulum membrane. Its function is as follows. Functions as a calcium-regulated nucleotide exchange factor activating both Ras and RAC1 through the exchange of bound GDP for GTP. Preferentially activates HRAS in vivo compared to RRAS based on their different types of prenylation. Functions in synaptic plasticity by contributing to the induction of long term potentiation. This Mus musculus (Mouse) protein is Ras-specific guanine nucleotide-releasing factor 2 (Rasgrf2).